The following is a 534-amino-acid chain: Peptide chain release factor 3 (534 aa).

A tr-type G domain is found at 9-278 (SRRRTFAIIS…FFVEHAPPPQ (270 aa)). GTP-binding positions include 18–25 (SHPDAGKT), 86–90 (DTPGH), and 140–143 (NKLD).

The protein belongs to the TRAFAC class translation factor GTPase superfamily. Classic translation factor GTPase family. PrfC subfamily.

It localises to the cytoplasm. Its function is as follows. Increases the formation of ribosomal termination complexes and stimulates activities of RF-1 and RF-2. It binds guanine nucleotides and has strong preference for UGA stop codons. It may interact directly with the ribosome. The stimulation of RF-1 and RF-2 is significantly reduced by GTP and GDP, but not by GMP. This is Peptide chain release factor 3 from Stenotrophomonas maltophilia (strain R551-3).